We begin with the raw amino-acid sequence, 347 residues long: tRNA N6-adenosine threonylcarbamoyltransferase (347 aa).

Fe cation-binding residues include H117 and H121. Residues 140–144 (LVSGG), D173, G186, and N280 each bind substrate. D308 contacts Fe cation.

Belongs to the KAE1 / TsaD family. Fe(2+) serves as cofactor.

The protein localises to the cytoplasm. The catalysed reaction is L-threonylcarbamoyladenylate + adenosine(37) in tRNA = N(6)-L-threonylcarbamoyladenosine(37) in tRNA + AMP + H(+). In terms of biological role, required for the formation of a threonylcarbamoyl group on adenosine at position 37 (t(6)A37) in tRNAs that read codons beginning with adenine. Is involved in the transfer of the threonylcarbamoyl moiety of threonylcarbamoyl-AMP (TC-AMP) to the N6 group of A37, together with TsaE and TsaB. TsaD likely plays a direct catalytic role in this reaction. In Psychrobacter sp. (strain PRwf-1), this protein is tRNA N6-adenosine threonylcarbamoyltransferase.